The sequence spans 131 residues: Flagellar assembly factor FliW (131 aa).

Belongs to the FliW family. In terms of assembly, interacts with translational regulator CsrA and flagellin(s).

The protein localises to the cytoplasm. Its function is as follows. Acts as an anti-CsrA protein, binds CsrA and prevents it from repressing translation of its target genes, one of which is flagellin. Binds to flagellin and participates in the assembly of the flagellum. In Campylobacter lari (strain RM2100 / D67 / ATCC BAA-1060), this protein is Flagellar assembly factor FliW.